The sequence spans 304 residues: ATP synthase gamma chain (304 aa).

The protein belongs to the ATPase gamma chain family. In terms of assembly, F-type ATPases have 2 components, CF(1) - the catalytic core - and CF(0) - the membrane proton channel. CF(1) has five subunits: alpha(3), beta(3), gamma(1), delta(1), epsilon(1). CF(0) has three main subunits: a, b and c.

The protein localises to the cell membrane. In terms of biological role, produces ATP from ADP in the presence of a proton gradient across the membrane. The gamma chain is believed to be important in regulating ATPase activity and the flow of protons through the CF(0) complex. This chain is ATP synthase gamma chain, found in Mycolicibacterium paratuberculosis (strain ATCC BAA-968 / K-10) (Mycobacterium paratuberculosis).